A 101-amino-acid chain; its full sequence is Small ribosomal subunit protein uS14 (101 aa).

It belongs to the universal ribosomal protein uS14 family. In terms of assembly, part of the 30S ribosomal subunit. Contacts proteins S3 and S10.

Its function is as follows. Binds 16S rRNA, required for the assembly of 30S particles and may also be responsible for determining the conformation of the 16S rRNA at the A site. The polypeptide is Small ribosomal subunit protein uS14 (Pseudomonas aeruginosa (strain LESB58)).